The sequence spans 197 residues: Fucoxanthin-chlorophyll a-c binding protein E, chloroplastic (197 aa).

A chloroplast-targeting transit peptide spans 1-31; the sequence is MKFVVFASLLASAARFAPAQQSARTSVATNM. 3 helical membrane passes run 73-94, 114-134, and 174-196; these read ISMLAVAGYLVQENGIRLPGDI, ISGAGIAQIVAFIGFLELAVM, and GRAAQMGILALMVHEQLGVSLIP.

This sequence belongs to the fucoxanthin chlorophyll protein family. As to quaternary structure, the LHC complex of chromophytic algae is composed of fucoxanthin, chlorophyll A and C bound non-covalently by fucoxanthin chlorophyll proteins (FCPs). The ratio of the pigments in LHC; fucoxanthin: chlorophyll C: chlorophyll A; (0.6-1): (0.1-0.3): (1).

The protein resides in the plastid. Its subcellular location is the chloroplast thylakoid membrane. Functionally, the light-harvesting complex (LHC) functions as a light receptor, it captures and delivers excitation energy to photosystems with which it is closely associated. Energy is transferred from the carotenoid and chlorophyll C (or B) to chlorophyll A and the photosynthetic reaction centers where it is used to synthesize ATP and reducing power. This Phaeodactylum tricornutum (Diatom) protein is Fucoxanthin-chlorophyll a-c binding protein E, chloroplastic (FCPE).